Reading from the N-terminus, the 710-residue chain is Dihydroxyacetone synthase (710 aa).

Residues His-78 and Gly-128 to Leu-130 each bind thiamine diphosphate. Positions 169, 199, and 201 each coordinate Mg(2+). Thiamine diphosphate is bound at residue Asn-199. Thiamine diphosphate contacts are provided by His-275, Glu-433, and Phe-461. Catalysis depends on Glu-433, which acts as the Proton donor. The Microbody targeting signal motif lies at Asn-708–Leu-710.

The protein belongs to the transketolase family. It depends on Mg(2+) as a cofactor. Requires Ca(2+) as cofactor. The cofactor is Mn(2+). Co(2+) is required as a cofactor. Thiamine diphosphate serves as cofactor.

It is found in the peroxisome. It catalyses the reaction D-xylulose 5-phosphate + formaldehyde = dihydroxyacetone + D-glyceraldehyde 3-phosphate. This is the major methanol assimilatory enzyme from the methylotrophic Hansenula polymorpha. This is Dihydroxyacetone synthase (DAS) from Pichia angusta (Yeast).